The sequence spans 341 residues: L-threonine 3-dehydrogenase (341 aa).

Cys-38 contributes to the Zn(2+) binding site. Catalysis depends on charge relay system residues Thr-40 and His-43. Zn(2+) is bound by residues His-63, Glu-64, Cys-93, Cys-96, Cys-99, and Cys-107. NAD(+) is bound by residues Ile-175, Asp-195, Arg-200, 262-264, and 286-287; these read LGI and IY.

It belongs to the zinc-containing alcohol dehydrogenase family. As to quaternary structure, homotetramer. Zn(2+) is required as a cofactor.

The protein localises to the cytoplasm. It catalyses the reaction L-threonine + NAD(+) = (2S)-2-amino-3-oxobutanoate + NADH + H(+). Its pathway is amino-acid degradation; L-threonine degradation via oxydo-reductase pathway; glycine from L-threonine: step 1/2. Its function is as follows. Catalyzes the NAD(+)-dependent oxidation of L-threonine to 2-amino-3-ketobutyrate. The protein is L-threonine 3-dehydrogenase of Salmonella typhi.